The chain runs to 302 residues: Sulfate adenylyltransferase subunit 2 (302 aa).

Residues 280-302 (RQGRLIDSDQSASMEQKKRQGYF) are disordered.

It belongs to the PAPS reductase family. CysD subfamily. In terms of assembly, heterodimer composed of CysD, the smaller subunit, and CysN.

The enzyme catalyses sulfate + ATP + H(+) = adenosine 5'-phosphosulfate + diphosphate. The protein operates within sulfur metabolism; hydrogen sulfide biosynthesis; sulfite from sulfate: step 1/3. Functionally, with CysN forms the ATP sulfurylase (ATPS) that catalyzes the adenylation of sulfate producing adenosine 5'-phosphosulfate (APS) and diphosphate, the first enzymatic step in sulfur assimilation pathway. APS synthesis involves the formation of a high-energy phosphoric-sulfuric acid anhydride bond driven by GTP hydrolysis by CysN coupled to ATP hydrolysis by CysD. The polypeptide is Sulfate adenylyltransferase subunit 2 (Shewanella putrefaciens (strain CN-32 / ATCC BAA-453)).